The chain runs to 68 residues: MAVPQNKITKSRRGQRRSHDALVAGNPNECPNCGELKRPHHVCAACGHYADREVIAQADEIDLDEDAA.

The segment at 1 to 25 (MAVPQNKITKSRRGQRRSHDALVAG) is disordered.

Belongs to the bacterial ribosomal protein bL32 family.

The polypeptide is Large ribosomal subunit protein bL32 (Dinoroseobacter shibae (strain DSM 16493 / NCIMB 14021 / DFL 12)).